A 117-amino-acid chain; its full sequence is Holo-[acyl-carrier-protein] synthase (117 aa).

Mg(2+) contacts are provided by aspartate 8 and glutamate 58.

The protein belongs to the P-Pant transferase superfamily. AcpS family. Mg(2+) is required as a cofactor.

The protein localises to the cytoplasm. The catalysed reaction is apo-[ACP] + CoA = holo-[ACP] + adenosine 3',5'-bisphosphate + H(+). Transfers the 4'-phosphopantetheine moiety from coenzyme A to a Ser of acyl-carrier-protein. The protein is Holo-[acyl-carrier-protein] synthase of Enterococcus faecalis (strain ATCC 700802 / V583).